A 1129-amino-acid chain; its full sequence is Kinesin-like protein KIP1 (1129 aa).

The disordered stretch occupies residues 1-49 (MLEQAEKLMKRNSSGAMSAPQSKPLARSRSSTMPTTTQKRVRSSQQSEG). 2 stretches are compositionally biased toward polar residues: residues 11–21 (RNSSGAMSAPQ) and 28–48 (SRSSTMPTTTQKRVRSSQQSE). Residues 54 to 417 (NIKVYVRCRS…LEYATRAKSI (364 aa)) enclose the Kinesin motor domain. 139 to 146 (GQTGTGKT) lines the ATP pocket. Coiled coils occupy residues 422–513 (QVNQ…ELDV), 681–765 (LEKE…QKIV), and 919–948 (DDQRRELRSVINNTNNHADRLRSEIGTLVN).

It belongs to the TRAFAC class myosin-kinesin ATPase superfamily. Kinesin family. BimC subfamily.

The protein localises to the cytoplasm. It localises to the cytoskeleton. It is found in the spindle. Required for assembly of the mitotic spindle. Interacts with spindle microtubules to produce an outwardly directed force acting upon the poles. Following spindle assembly, CIN8 and KIP1 apparently act to oppose a force that draws separated poles back together. This force seems to be mediate by KAR3. This is Kinesin-like protein KIP1 (KIP1) from Eremothecium gossypii (strain ATCC 10895 / CBS 109.51 / FGSC 9923 / NRRL Y-1056) (Yeast).